The following is a 342-amino-acid chain: Oxygen-dependent coproporphyrinogen-III oxidase (342 aa).

Ser107 is a binding site for substrate. 2 residues coordinate a divalent metal cation: His111 and His121. The active-site Proton donor is the His121. 123 to 125 provides a ligand contact to substrate; that stretch reads NYR. Positions 155 and 185 each coordinate a divalent metal cation. The interval 277–312 is important for dimerization; the sequence is YVEFNLVYDRGTIFGLQTNGRTESILMSLPPLVRWE.

The protein belongs to the aerobic coproporphyrinogen-III oxidase family. Homodimer. A divalent metal cation serves as cofactor.

The protein localises to the cytoplasm. It catalyses the reaction coproporphyrinogen III + O2 + 2 H(+) = protoporphyrinogen IX + 2 CO2 + 2 H2O. Its pathway is porphyrin-containing compound metabolism; protoporphyrin-IX biosynthesis; protoporphyrinogen-IX from coproporphyrinogen-III (O2 route): step 1/1. Its function is as follows. Involved in the heme and chlorophyll biosynthesis. Catalyzes the aerobic oxidative decarboxylation of propionate groups of rings A and B of coproporphyrinogen-III to yield the vinyl groups in protoporphyrinogen-IX. The sequence is that of Oxygen-dependent coproporphyrinogen-III oxidase from Synechococcus sp. (strain ATCC 27144 / PCC 6301 / SAUG 1402/1) (Anacystis nidulans).